We begin with the raw amino-acid sequence, 547 residues long: Probable FMN/FAD exporter YeeO (547 aa).

Transmembrane regions (helical) follow at residues 94–114, 139–159, 174–194, 211–231, 246–268, 281–301, 318–338, 350–370, 404–424, 439–459, and 486–506; these read ITPL…MGVL, VIMA…AFSL, SLVI…HFGE, LALT…ITLI, LLIN…YGLF, GLTI…AIGF, FSII…SVLF, AGMG…AALI, VFWL…PFAG, VVVI…ASWV, and VVVG…VWMG.

It belongs to the multi antimicrobial extrusion (MATE) (TC 2.A.66.1) family.

Its subcellular location is the cell inner membrane. In terms of biological role, a transporter able to export peptides and flavins. When overexpressed allows cells deleted for multiple peptidases (pepA, pepB, pepD and pepN) to grow in the presence of dipeptides Ala-Gln or Gly-Tyr which otherwise inhibit growth. Cells overexpressing this protein have decreased intracellular levels of Ala-Gln dipeptide, and in a system that produces the Ala-Gln dipeptide, overproduction of this protein increases its export. When overexpressed increases secretion of FMN and FAD but not riboflavin; intracellular concentrations of FMN and riboflavin rise, possibly to compensate for increased secretion. Increased overexpression causes slight cell elongation. The chain is Probable FMN/FAD exporter YeeO (yeeO) from Escherichia coli (strain K12).